Reading from the N-terminus, the 113-residue chain is Holo-[acyl-carrier-protein] synthase (113 aa).

Positions 8 and 57 each coordinate Mg(2+).

Belongs to the P-Pant transferase superfamily. AcpS family. The cofactor is Mg(2+).

It localises to the cytoplasm. It carries out the reaction apo-[ACP] + CoA = holo-[ACP] + adenosine 3',5'-bisphosphate + H(+). Its function is as follows. Transfers the 4'-phosphopantetheine moiety from coenzyme A to a Ser of acyl-carrier-protein. The protein is Holo-[acyl-carrier-protein] synthase of Thermodesulfovibrio yellowstonii (strain ATCC 51303 / DSM 11347 / YP87).